The primary structure comprises 1049 residues: Retinoblastoma-like protein 1 (1049 aa).

Threonine 332, threonine 369, and threonine 385 each carry phosphothreonine. A domain A region spans residues 385–584 (TPVASATQSV…WEALRASANK (200 aa)). Positions 385–944 (TPVASATQSV…GRVKSFALKY (560 aa)) are pocket; binds T and E1A. The segment at 585–779 (VPSCEEVIFP…TQDAPLTGIS (195 aa)) is spacer. Phosphoserine is present on residues serine 640, serine 650, serine 748, and serine 761. Positions 780–944 (KPKRTGSLAL…GRVKSFALKY (165 aa)) are domain B. A phosphoserine mark is found at serine 959, serine 970, and serine 983. The residue at position 992 (threonine 992) is a Phosphothreonine. 2 positions are modified to phosphoserine: serine 1004 and serine 1022.

Belongs to the retinoblastoma protein (RB) family. In terms of assembly, component of the DREAM complex (also named LINC complex) at least composed of E2F4, E2F5, LIN9, LIN37, LIN52, LIN54, MYBL1, MYBL2, RBL1, RBL2, RBBP4, TFDP1 and TFDP2. The complex exists in quiescent cells where it represses cell cycle-dependent genes. It dissociates in S phase when LIN9, LIN37, LIN52 and LIN54 form a subcomplex that binds to MYBL2. Interacts with AATF. Interacts with KDM5A. Interacts with KMT5B and KMT5C. Interacts with USP4. Interacts with RBBP9. Post-translationally, cell-cycle arrest properties are inactivated by phosphorylation on Thr-332, Ser-640, Ser-959 and Ser-970 by CDK4.

It localises to the nucleus. Key regulator of entry into cell division. Directly involved in heterochromatin formation by maintaining overall chromatin structure and, in particular, that of constitutive heterochromatin by stabilizing histone methylation. Recruits and targets histone methyltransferases KMT5B and KMT5C, leading to epigenetic transcriptional repression. Controls histone H4 'Lys-20' trimethylation. Probably acts as a transcription repressor by recruiting chromatin-modifying enzymes to promoters. Potent inhibitor of E2F-mediated trans-activation. May act as a tumor suppressor. This is Retinoblastoma-like protein 1 from Rattus norvegicus (Rat).